An 83-amino-acid polypeptide reads, in one-letter code: Putative cytochrome b5 B11H24.095 (83 aa).

The 77-residue stretch at Ser-2–Ala-78 folds into the Cytochrome b5 heme-binding domain. Residues His-37 and His-60 each coordinate heme.

Belongs to the cytochrome b5 family.

In Neurospora crassa (strain ATCC 24698 / 74-OR23-1A / CBS 708.71 / DSM 1257 / FGSC 987), this protein is Putative cytochrome b5 B11H24.095.